The following is a 105-amino-acid chain: Large ribosomal subunit protein uL24 (105 aa).

It belongs to the universal ribosomal protein uL24 family. In terms of assembly, part of the 50S ribosomal subunit.

One of two assembly initiator proteins, it binds directly to the 5'-end of the 23S rRNA, where it nucleates assembly of the 50S subunit. Its function is as follows. One of the proteins that surrounds the polypeptide exit tunnel on the outside of the subunit. The sequence is that of Large ribosomal subunit protein uL24 from Xanthomonas axonopodis pv. citri (strain 306).